Consider the following 342-residue polypeptide: Holliday junction branch migration complex subunit RuvB (342 aa).

A large ATPase domain (RuvB-L) region spans residues 2–181 (TDNPLLSSAS…FGIPVRLQFY (180 aa)). Positions 20, 21, 62, 65, 66, 67, 171, 181, and 218 each coordinate ATP. Mg(2+) is bound at residue Thr-66. A small ATPAse domain (RuvB-S) region spans residues 182-252 (SVEELERVVA…IADNALTRLE (71 aa)). The segment at 255 to 342 (KIGLDLQDRR…QMPGLFGPDE (88 aa)) is head domain (RuvB-H). DNA-binding residues include Arg-291, Arg-310, and Arg-315.

It belongs to the RuvB family. Homohexamer. Forms an RuvA(8)-RuvB(12)-Holliday junction (HJ) complex. HJ DNA is sandwiched between 2 RuvA tetramers; dsDNA enters through RuvA and exits via RuvB. An RuvB hexamer assembles on each DNA strand where it exits the tetramer. Each RuvB hexamer is contacted by two RuvA subunits (via domain III) on 2 adjacent RuvB subunits; this complex drives branch migration. In the full resolvosome a probable DNA-RuvA(4)-RuvB(12)-RuvC(2) complex forms which resolves the HJ.

It is found in the cytoplasm. The enzyme catalyses ATP + H2O = ADP + phosphate + H(+). Its function is as follows. The RuvA-RuvB-RuvC complex processes Holliday junction (HJ) DNA during genetic recombination and DNA repair, while the RuvA-RuvB complex plays an important role in the rescue of blocked DNA replication forks via replication fork reversal (RFR). RuvA specifically binds to HJ cruciform DNA, conferring on it an open structure. The RuvB hexamer acts as an ATP-dependent pump, pulling dsDNA into and through the RuvAB complex. RuvB forms 2 homohexamers on either side of HJ DNA bound by 1 or 2 RuvA tetramers; 4 subunits per hexamer contact DNA at a time. Coordinated motions by a converter formed by DNA-disengaged RuvB subunits stimulates ATP hydrolysis and nucleotide exchange. Immobilization of the converter enables RuvB to convert the ATP-contained energy into a lever motion, pulling 2 nucleotides of DNA out of the RuvA tetramer per ATP hydrolyzed, thus driving DNA branch migration. The RuvB motors rotate together with the DNA substrate, which together with the progressing nucleotide cycle form the mechanistic basis for DNA recombination by continuous HJ branch migration. Branch migration allows RuvC to scan DNA until it finds its consensus sequence, where it cleaves and resolves cruciform DNA. This is Holliday junction branch migration complex subunit RuvB from Novosphingobium aromaticivorans (strain ATCC 700278 / DSM 12444 / CCUG 56034 / CIP 105152 / NBRC 16084 / F199).